Reading from the N-terminus, the 207-residue chain is Interleukin-6 (207 aa).

Positions 1-20 (MNSLSTSAFSLGLLLVMATA) are cleaved as a signal peptide. A disulfide bond links Cys67 and Cys73. Ser76 carries the phosphoserine modification. The cysteines at positions 96 and 106 are disulfide-linked.

The protein belongs to the IL-6 superfamily. As to quaternary structure, component of a hexamer of two molecules each of IL6, IL6R and IL6ST; first binds to IL6R to associate with the signaling subunit IL6ST. Interacts with IL6R (via the N-terminal ectodomain); this interaction may be affected by IL6R-binding with SORL1, hence decreasing IL6 cis signaling. Interacts with SORL1 (via the N-terminal ectodomain); this interaction leads to IL6 internalization and lysosomal degradation. May form a trimeric complex with the soluble SORL1 ectodomain and soluble IL6R receptor; this interaction might stabilize circulating IL6, hence promoting IL6 trans signaling.

The protein localises to the secreted. In terms of biological role, cytokine with a wide variety of biological functions in immunity, tissue regeneration, and metabolism. Binds to IL6R, then the complex associates to the signaling subunit IL6ST/gp130 to trigger the intracellular IL6-signaling pathway. The interaction with the membrane-bound IL6R and IL6ST stimulates 'classic signaling', whereas the binding of IL6 and soluble IL6R to IL6ST stimulates 'trans-signaling'. Alternatively, 'cluster signaling' occurs when membrane-bound IL6:IL6R complexes on transmitter cells activate IL6ST receptors on neighboring receiver cells. Its function is as follows. IL6 is a potent inducer of the acute phase response. Rapid production of IL6 contributes to host defense during infection and tissue injury, but excessive IL6 synthesis is involved in disease pathology. In the innate immune response, is synthesized by myeloid cells, such as macrophages and dendritic cells, upon recognition of pathogens through toll-like receptors (TLRs) at the site of infection or tissue injury. In the adaptive immune response, is required for the differentiation of B cells into immunoglobulin-secreting cells. Plays a major role in the differentiation of CD4(+) T cell subsets. Essential factor for the development of T follicular helper (Tfh) cells that are required for the induction of germinal-center formation. Required to drive naive CD4(+) T cells to the Th17 lineage. Also required for proliferation of myeloma cells and the survival of plasmablast cells. Functionally, acts as an essential factor in bone homeostasis and on vessels directly or indirectly by induction of VEGF, resulting in increased angiogenesis activity and vascular permeability. Induces, through 'trans-signaling' and synergistically with IL1B and TNF, the production of VEGF. Involved in metabolic controls, is discharged into the bloodstream after muscle contraction increasing lipolysis and improving insulin resistance. 'Trans-signaling' in central nervous system also regulates energy and glucose homeostasis. Mediates, through GLP-1, crosstalk between insulin-sensitive tissues, intestinal L cells and pancreatic islets to adapt to changes in insulin demand. Also acts as a myokine. Plays a protective role during liver injury, being required for maintenance of tissue regeneration. Also has a pivotal role in iron metabolism by regulating HAMP/hepcidin expression upon inflammation or bacterial infection. Through activation of IL6ST-YAP-NOTCH pathway, induces inflammation-induced epithelial regeneration. The polypeptide is Interleukin-6 (IL6) (Vulpes vulpes (Red fox)).